We begin with the raw amino-acid sequence, 304 residues long: Methionyl-tRNA formyltransferase (304 aa).

Ser-107–Pro-110 lines the (6S)-5,6,7,8-tetrahydrofolate pocket.

Belongs to the Fmt family.

The catalysed reaction is L-methionyl-tRNA(fMet) + (6R)-10-formyltetrahydrofolate = N-formyl-L-methionyl-tRNA(fMet) + (6S)-5,6,7,8-tetrahydrofolate + H(+). Its function is as follows. Attaches a formyl group to the free amino group of methionyl-tRNA(fMet). The formyl group appears to play a dual role in the initiator identity of N-formylmethionyl-tRNA by promoting its recognition by IF2 and preventing the misappropriation of this tRNA by the elongation apparatus. This Coprothermobacter proteolyticus (strain ATCC 35245 / DSM 5265 / OCM 4 / BT) protein is Methionyl-tRNA formyltransferase.